Here is a 561-residue protein sequence, read N- to C-terminus: Lysine--tRNA ligase (561 aa).

Positions 409 and 416 each coordinate Mg(2+).

It belongs to the class-II aminoacyl-tRNA synthetase family. As to quaternary structure, homodimer. It depends on Mg(2+) as a cofactor.

The protein localises to the cytoplasm. The enzyme catalyses tRNA(Lys) + L-lysine + ATP = L-lysyl-tRNA(Lys) + AMP + diphosphate. The protein is Lysine--tRNA ligase of Nostoc punctiforme (strain ATCC 29133 / PCC 73102).